The sequence spans 56 residues: Ferredoxin (56 aa).

4Fe-4S ferredoxin-type domains follow at residues 2 to 28 and 29 to 56; these read AYKI…SQGD and TQFV…PVQE. Cys-9, Cys-12, Cys-15, Cys-19, Cys-38, Cys-41, Cys-44, and Cys-48 together coordinate [4Fe-4S] cluster.

The cofactor is [4Fe-4S] cluster.

Functionally, ferredoxins are iron-sulfur proteins that transfer electrons in a wide variety of metabolic reactions. This Clostridium perfringens (strain 13 / Type A) protein is Ferredoxin (fer).